Reading from the N-terminus, the 88-residue chain is Small ribosomal subunit protein uS15 (88 aa).

Belongs to the universal ribosomal protein uS15 family. As to quaternary structure, part of the 30S ribosomal subunit. Forms a bridge to the 50S subunit in the 70S ribosome, contacting the 23S rRNA.

In terms of biological role, one of the primary rRNA binding proteins, it binds directly to 16S rRNA where it helps nucleate assembly of the platform of the 30S subunit by binding and bridging several RNA helices of the 16S rRNA. Functionally, forms an intersubunit bridge (bridge B4) with the 23S rRNA of the 50S subunit in the ribosome. The polypeptide is Small ribosomal subunit protein uS15 (Mesomycoplasma flocculare (Mycoplasma flocculare)).